The sequence spans 195 residues: Imidazoleglycerol-phosphate dehydratase (195 aa).

Belongs to the imidazoleglycerol-phosphate dehydratase family.

Its subcellular location is the cytoplasm. It carries out the reaction D-erythro-1-(imidazol-4-yl)glycerol 3-phosphate = 3-(imidazol-4-yl)-2-oxopropyl phosphate + H2O. It participates in amino-acid biosynthesis; L-histidine biosynthesis; L-histidine from 5-phospho-alpha-D-ribose 1-diphosphate: step 6/9. This Bordetella petrii (strain ATCC BAA-461 / DSM 12804 / CCUG 43448) protein is Imidazoleglycerol-phosphate dehydratase.